Here is a 597-residue protein sequence, read N- to C-terminus: Spastin (597 aa).

At 1–20 the chain is on the cytoplasmic side; it reads MPNNDILRPLAIPAKYVGSF. The segment at residues 21–37 is an intramembrane region (helical); it reads LVFLYNGLYFVFVVNLW. At 38–597 the chain is on the cytoplasmic side; sequence SRLFGKATKT…DWNRLYGSNA (560 aa). Positions 56-80 are disordered; sequence RKLGKDMASRAPPRRGQSSEDNEDG. The region spanning 91-168 is the MIT domain; it reads HHKQAYAYIA…ENTRERMDEL (78 aa). The tract at residues 193-289 is disordered; that stretch reads SARKTSSEPS…PAMMAKQSCV (97 aa). Residues 214 to 231 are compositionally biased toward polar residues; that stretch reads SYKQSKSYKNSTTVTTKR. Residues 232–252 show a composition bias toward low complexity; it reads SQASPSFSSSSSSVNSTAGSS.

Belongs to the AAA ATPase family. Spastin subfamily. Homohexamer. The homohexamer is stabilized by ATP-binding. The homohexamer may adopt a ring conformation through which microtubules pass prior to being severed. Interacts with microtubules.

The protein localises to the membrane. It is found in the cytoplasm. Its subcellular location is the cytoskeleton. The protein resides in the microtubule organizing center. It localises to the centrosome. The enzyme catalyses n ATP + n H2O + a microtubule = n ADP + n phosphate + (n+1) alpha/beta tubulin heterodimers.. Its function is as follows. ATP-dependent microtubule severing protein. Microtubule severing may promote reorganization of cellular microtubule arrays and the release of microtubules from the microtubule organizing center following nucleation. This is Spastin from Nematostella vectensis (Starlet sea anemone).